A 265-amino-acid chain; its full sequence is Undecaprenyl-diphosphatase (265 aa).

The next 8 membrane-spanning stretches (helical) occupy residues 15-37 (GLTE…LLEY), 41-61 (KAES…VFLY), 85-105 (YLLA…HSFI), 109-129 (LFGP…ILAV), 144-164 (VSPA…WPGF), 183-203 (LAAE…TGYD), 218-238 (FWAV…KGFI), and 244-264 (VTFR…LLFW).

The protein belongs to the UppP family.

Its subcellular location is the cell inner membrane. The catalysed reaction is di-trans,octa-cis-undecaprenyl diphosphate + H2O = di-trans,octa-cis-undecaprenyl phosphate + phosphate + H(+). In terms of biological role, catalyzes the dephosphorylation of undecaprenyl diphosphate (UPP). Confers resistance to bacitracin. This is Undecaprenyl-diphosphatase from Oleidesulfovibrio alaskensis (strain ATCC BAA-1058 / DSM 17464 / G20) (Desulfovibrio alaskensis).